The sequence spans 88 residues: Cytochrome c oxidase subunit 6B2 (88 aa).

Residues 1–22 are disordered; sequence MLDVEAQEPPKGKWSTPPFDPR. Positions 29-75 constitute a CHCH domain; that stretch reads IRNCYQNFLDYHRCLKTRTRRGKSTQPCEYYFRVYHSLCPISWVESW. The Cx9C motif signature appears at 32 to 42; sequence CYQNFLDYHRC. 2 disulfide bridges follow: C32/C67 and C42/C56. The Cx10C motif signature appears at 56 to 67; the sequence is CEYYFRVYHSLC.

It belongs to the cytochrome c oxidase subunit 6B family. In terms of assembly, component of the cytochrome c oxidase (complex IV, CIV), a multisubunit enzyme composed of 14 subunits. The complex is composed of a catalytic core of 3 subunits MT-CO1, MT-CO2 and MT-CO3, encoded in the mitochondrial DNA, and 11 supernumerary subunits COX4I1 (or COX4I2), COX5A, COX5B, COX6A1 (or COX6A2), COX6B1 (or COX6B2), COX6C, COX7A2 (or COX7A1), COX7B, COX7C, COX8A and NDUFA4, which are encoded in the nuclear genome. The complex exists as a monomer or a dimer and forms supercomplexes (SCs) in the inner mitochondrial membrane with NADH-ubiquinone oxidoreductase (complex I, CI) and ubiquinol-cytochrome c oxidoreductase (cytochrome b-c1 complex, complex III, CIII), resulting in different assemblies (supercomplex SCI(1)III(2)IV(1) and megacomplex MCI(2)III(2)IV(2)). As to expression, testis specific. Weak expression in thymus and heart. Expressed in cancer cell lines.

Its subcellular location is the mitochondrion inner membrane. Its pathway is energy metabolism; oxidative phosphorylation. In terms of biological role, component of the cytochrome c oxidase, the last enzyme in the mitochondrial electron transport chain which drives oxidative phosphorylation. The respiratory chain contains 3 multisubunit complexes succinate dehydrogenase (complex II, CII), ubiquinol-cytochrome c oxidoreductase (cytochrome b-c1 complex, complex III, CIII) and cytochrome c oxidase (complex IV, CIV), that cooperate to transfer electrons derived from NADH and succinate to molecular oxygen, creating an electrochemical gradient over the inner membrane that drives transmembrane transport and the ATP synthase. Cytochrome c oxidase is the component of the respiratory chain that catalyzes the reduction of oxygen to water. Electrons originating from reduced cytochrome c in the intermembrane space (IMS) are transferred via the dinuclear copper A center (CU(A)) of subunit 2 and heme A of subunit 1 to the active site in subunit 1, a binuclear center (BNC) formed by heme A3 and copper B (CU(B)). The BNC reduces molecular oxygen to 2 water molecules using 4 electrons from cytochrome c in the IMS and 4 protons from the mitochondrial matrix. This chain is Cytochrome c oxidase subunit 6B2 (COX6B2), found in Homo sapiens (Human).